Reading from the N-terminus, the 122-residue chain is Large ribosomal subunit protein uL18 (122 aa).

It belongs to the universal ribosomal protein uL18 family. In terms of assembly, part of the 50S ribosomal subunit; part of the 5S rRNA/L5/L18/L25 subcomplex. Contacts the 5S and 23S rRNAs.

Functionally, this is one of the proteins that bind and probably mediate the attachment of the 5S RNA into the large ribosomal subunit, where it forms part of the central protuberance. The sequence is that of Large ribosomal subunit protein uL18 from Desulfatibacillum aliphaticivorans.